Here is a 237-residue protein sequence, read N- to C-terminus: Cysteine-rich venom protein ENH2 (237 aa).

The N-terminal stretch at 1 to 18 (MIVFILLSLAAVLQQFVA) is a signal peptide. The 129-residue stretch at 37-165 (VDMHNSFRRS…PYNYFYVCQY (129 aa)) folds into the SCP domain. Intrachain disulfides connect Cys74-Cys152, Cys91-Cys166, Cys147-Cys163, Cys185-Cys192, Cys188-Cys197, Cys210-Cys228, and Cys219-Cys232. The ShKT domain occupies 201-237 (CPITNTFTNCDSLLQQNSCEDSYIKTNCGASCFGQDK).

It belongs to the CRISP family. In terms of tissue distribution, expressed by the venom gland.

It localises to the secreted. Blocks contraction of smooth muscle elicited by high potassium-induced depolarization, but does not block caffeine-stimulated contraction. May target voltage-gated calcium channels on smooth muscle. In Pseudoferania polylepis (Macleay's water snake), this protein is Cysteine-rich venom protein ENH2.